Consider the following 109-residue polypeptide: Staphostatin B (109 aa).

Residues 97 to 101 are binds to staphopain B; it reads IGTSR.

This sequence belongs to the protease inhibitor I57 (SspC) family. Forms a stable non-covalent complex with prematurely activated/folded SspB.

It is found in the cytoplasm. Its function is as follows. Specifically inhibits the cysteine protease staphopain B (SspB) by blocking the active site of the enzyme. Probably required to protect cytoplasmic proteins from being degraded by prematurely activated/folded prostaphopain B. Also involved in growth capacity, viability and bacterial morphology. This chain is Staphostatin B (sspC), found in Staphylococcus aureus (strain MRSA252).